The sequence spans 103 residues: Large ribosomal subunit protein bL21 (103 aa).

It belongs to the bacterial ribosomal protein bL21 family. Part of the 50S ribosomal subunit. Contacts protein L20.

In terms of biological role, this protein binds to 23S rRNA in the presence of protein L20. This is Large ribosomal subunit protein bL21 from Shewanella frigidimarina (strain NCIMB 400).